The sequence spans 206 residues: 3-isopropylmalate dehydratase small subunit (206 aa).

Belongs to the LeuD family. LeuD type 1 subfamily. Heterodimer of LeuC and LeuD.

The enzyme catalyses (2R,3S)-3-isopropylmalate = (2S)-2-isopropylmalate. The protein operates within amino-acid biosynthesis; L-leucine biosynthesis; L-leucine from 3-methyl-2-oxobutanoate: step 2/4. Functionally, catalyzes the isomerization between 2-isopropylmalate and 3-isopropylmalate, via the formation of 2-isopropylmaleate. This is 3-isopropylmalate dehydratase small subunit from Acidobacterium capsulatum (strain ATCC 51196 / DSM 11244 / BCRC 80197 / JCM 7670 / NBRC 15755 / NCIMB 13165 / 161).